A 350-amino-acid chain; its full sequence is Protein RecA (350 aa).

Position 68–75 (68–75) interacts with ATP; the sequence is GPESSGKT.

Belongs to the RecA family.

The protein resides in the cytoplasm. Its function is as follows. Can catalyze the hydrolysis of ATP in the presence of single-stranded DNA, the ATP-dependent uptake of single-stranded DNA by duplex DNA, and the ATP-dependent hybridization of homologous single-stranded DNAs. It interacts with LexA causing its activation and leading to its autocatalytic cleavage. This chain is Protein RecA, found in Symbiobacterium thermophilum (strain DSM 24528 / JCM 14929 / IAM 14863 / T).